Reading from the N-terminus, the 275-residue chain is Integrase homolog (275 aa).

The segment covering 88 to 111 (RVSQDRQAQGRERRSVLLPQERRG) has biased composition (basic and acidic residues). The disordered stretch occupies residues 88 to 120 (RVSQDRQAQGRERRSVLLPQERRGSSGRQPLYS).

This sequence belongs to the 'phage' integrase family.

In terms of biological role, integrase-recombinase proteins are responsible for catalyzing strand exchange between DNA molecules and play an important role in the DNA replication. May be required for the formation of concatameric complex replicative intermediates and/or their resolution before encapsidation. The sequence is that of Integrase homolog (INT) from Dryophytes versicolor (chameleon treefrog).